Consider the following 511-residue polypeptide: Ulvan-active sulfatase (511 aa).

Residues 1–34 (MNFKQNIVYKKMAISMKITAIRPIALVISFTLLS) form the signal peptide. A lipid anchor (N-palmitoyl cysteine) is attached at C35. The S-diacylglycerol cysteine moiety is linked to residue C35. 2 residues coordinate Ca(2+): D59 and C99. Catalysis depends on C99, which acts as the Nucleophile. The residue at position 99 (C99) is a 3-oxoalanine (Cys). Residue H149 is part of the active site. Ca(2+) is bound at residue D305.

Belongs to the sulfatase family. The cofactor is Ca(2+). In terms of processing, the conversion to 3-oxoalanine (also known as C-formylglycine, FGly), of a serine or cysteine residue in prokaryotes and of a cysteine residue in eukaryotes, is critical for catalytic activity. This post-translational modification is severely defective in multiple sulfatase deficiency (MSD).

It localises to the cell membrane. In terms of biological role, sulfatase involved in ulvan degradation. Ulvan is the main polysaccharide component of the Ulvales (green seaweed) cell wall. It is composed of disaccharide building blocks comprising 3-sulfated rhamnose (Rha3S) linked to D-glucuronic acid (GlcA), L-iduronic acid (IduA), or D-xylose (Xyl). This is Ulvan-active sulfatase from Formosa agariphila (strain DSM 15362 / KCTC 12365 / LMG 23005 / KMM 3901 / M-2Alg 35-1).